Consider the following 545-residue polypeptide: Alpha-galactosidase A (545 aa).

Positions 1–31 (MIQGLESIMNQGTKRILLAATLAATPWQVYG) are cleaved as a signal peptide. Cysteines 54 and 86 form a disulfide. 4 N-linked (GlcNAc...) asparagine glycosylation sites follow: N57, N95, N101, and N131. A disulfide bridge links C134 with C164. D162 functions as the Nucleophile in the catalytic mechanism. The N-linked (GlcNAc...) asparagine glycan is linked to N211. D220 acts as the Proton donor in catalysis. N-linked (GlcNAc...) asparagine glycosylation is found at N363 and N444. Residues 421–518 (CSSVVPTGLV…KNAKTDGCLT (98 aa)) enclose the Ricin B-type lectin domain. Intrachain disulfides connect C438–C452 and C477–C490.

The protein belongs to the glycosyl hydrolase 27 family. Post-translationally, a C-terminal Ser/Thr-rich region may provide possible sites for O-glycosylation.

Its subcellular location is the secreted. The enzyme catalyses Hydrolysis of terminal, non-reducing alpha-D-galactose residues in alpha-D-galactosides, including galactose oligosaccharides, galactomannans and galactolipids.. Functionally, hydrolyzes a variety of simple alpha-D-galactoside as well as more complex molecules such as oligosaccharides and polysaccharides. In Aspergillus niger, this protein is Alpha-galactosidase A (aglA).